The sequence spans 128 residues: Ribonuclease P protein component (128 aa).

This sequence belongs to the RnpA family. As to quaternary structure, consists of a catalytic RNA component (M1 or rnpB) and a protein subunit.

It catalyses the reaction Endonucleolytic cleavage of RNA, removing 5'-extranucleotides from tRNA precursor.. Functionally, RNaseP catalyzes the removal of the 5'-leader sequence from pre-tRNA to produce the mature 5'-terminus. It can also cleave other RNA substrates such as 4.5S RNA. The protein component plays an auxiliary but essential role in vivo by binding to the 5'-leader sequence and broadening the substrate specificity of the ribozyme. In Prochlorococcus marinus (strain MIT 9301), this protein is Ribonuclease P protein component.